A 689-amino-acid chain; its full sequence is DNA ligase (689 aa).

NAD(+) is bound by residues 40-44 (DAEYD), 89-90 (SL), and Glu-121. Lys-123 functions as the N6-AMP-lysine intermediate in the catalytic mechanism. Arg-144, Glu-179, Lys-295, and Lys-319 together coordinate NAD(+). 4 residues coordinate Zn(2+): Cys-413, Cys-416, Cys-431, and Cys-437. The 80-residue stretch at 610 to 689 (KEHSSLTGKI…EEWLTIVNNV (80 aa)) folds into the BRCT domain.

It belongs to the NAD-dependent DNA ligase family. LigA subfamily. The cofactor is Mg(2+). It depends on Mn(2+) as a cofactor.

The enzyme catalyses NAD(+) + (deoxyribonucleotide)n-3'-hydroxyl + 5'-phospho-(deoxyribonucleotide)m = (deoxyribonucleotide)n+m + AMP + beta-nicotinamide D-nucleotide.. In terms of biological role, DNA ligase that catalyzes the formation of phosphodiester linkages between 5'-phosphoryl and 3'-hydroxyl groups in double-stranded DNA using NAD as a coenzyme and as the energy source for the reaction. It is essential for DNA replication and repair of damaged DNA. In Rickettsia canadensis (strain McKiel), this protein is DNA ligase.